A 76-amino-acid chain; its full sequence is Large ribosomal subunit protein bL31 (76 aa).

Zn(2+) contacts are provided by Cys-16, Cys-18, Cys-36, and Cys-39.

Belongs to the bacterial ribosomal protein bL31 family. Type A subfamily. As to quaternary structure, part of the 50S ribosomal subunit. Zn(2+) serves as cofactor.

Binds the 23S rRNA. This is Large ribosomal subunit protein bL31 from Syntrophobacter fumaroxidans (strain DSM 10017 / MPOB).